The following is a 211-amino-acid chain: Large ribosomal subunit protein eL13 (211 aa).

Belongs to the eukaryotic ribosomal protein eL13 family. As to quaternary structure, component of the 60S large ribosomal subunit (LSU).

It is found in the cytoplasm. Component of the ribosome, a large ribonucleoprotein complex responsible for the synthesis of proteins in the cell. The small ribosomal subunit (SSU) binds messenger RNAs (mRNAs) and translates the encoded message by selecting cognate aminoacyl-transfer RNA (tRNA) molecules. The large subunit (LSU) contains the ribosomal catalytic site termed the peptidyl transferase center (PTC), which catalyzes the formation of peptide bonds, thereby polymerizing the amino acids delivered by tRNAs into a polypeptide chain. The nascent polypeptides leave the ribosome through a tunnel in the LSU and interact with protein factors that function in enzymatic processing, targeting, and the membrane insertion of nascent chains at the exit of the ribosomal tunnel. As part of the LSU, it is probably required for its formation and the maturation of rRNAs. This Danio rerio (Zebrafish) protein is Large ribosomal subunit protein eL13 (rpl13).